The chain runs to 299 residues: Syntenin-1 (299 aa).

Serine 2 is subject to N-acetylserine. Residues 2–103 (SLYPSLEDLK…VAPVTGNDAG (102 aa)) are interaction with PDCD6IP. 3 consecutive short sequence motifs (LYPX(n)L motif) follow at residues 3-7 (LYPSL), 46-50 (LYPKL), and 50-54 (LYPEL). Phosphoserine is present on serine 6. Tyrosine 47 is modified (phosphotyrosine). 2 PDZ domains span residues 115–194 (EVIL…IRDR) and 199–273 (TVTM…IMPT). 251-252 (KD) contacts a 1,2-diacyl-sn-glycero-3-phospho-(1D-myo-inositol-4,5-bisphosphate).

As to quaternary structure, monomer and homodimer. Interacts with SDC1, SDC2, SDC3, SDC4, NRXN2, EPHA7, EPHB1, NF2 isoform 1, TGFA, IL5RA, NFASC, SDCBP2 and PTPRJ. Interacts with PDCD6IP. Forms a complex with PDCD6IP and SDC2. Interacts (via C-terminus) with TGFBR1. Binds to FZD7; this interaction is increased by inositol trisphosphate (IP3). Interacts with SMO. Phosphorylated on tyrosine residues.

It is found in the cell junction. It localises to the focal adhesion. The protein resides in the adherens junction. Its subcellular location is the cell membrane. The protein localises to the endoplasmic reticulum membrane. It is found in the nucleus. It localises to the melanosome. The protein resides in the cytoplasm. Its subcellular location is the cytosol. The protein localises to the cytoskeleton. It is found in the secreted. It localises to the extracellular exosome. The protein resides in the membrane raft. Its function is as follows. Multifunctional adapter protein involved in diverse array of functions including trafficking of transmembrane proteins, neuro and immunomodulation, exosome biogenesis, and tumorigenesis. Positively regulates TGFB1-mediated SMAD2/3 activation and TGFB1-induced epithelial-to-mesenchymal transition (EMT) and cell migration in various cell types. May increase TGFB1 signaling by enhancing cell-surface expression of TGFR1 by preventing the interaction between TGFR1 and CAV1 and subsequent CAV1-dependent internalization and degradation of TGFR1. In concert with SDC1/4 and PDCD6IP, regulates exosome biogenesis. Regulates migration, growth, proliferation, and cell cycle progression in a variety of cancer types. In adherens junctions may function to couple syndecans to cytoskeletal proteins or signaling components. Seems to couple transcription factor SOX4 to the IL-5 receptor (IL5RA). May also play a role in vesicular trafficking. Seems to be required for the targeting of TGFA to the cell surface in the early secretory pathway. This Mus musculus (Mouse) protein is Syntenin-1 (Sdcbp).